A 311-amino-acid chain; its full sequence is Retinol dehydrogenase 8 (311 aa).

Residue 9 to 18 (LISGCSSGIG) participates in NADP(+) binding. Transmembrane regions (helical) follow at residues 86–106 (VLVN…SLAA), 137–157 (IVVI…VYAA), and 169–189 (LAIQ…GPVV). S142 is a binding site for substrate. Residue Y155 is the Proton acceptor of the active site.

This sequence belongs to the short-chain dehydrogenases/reductases (SDR) family. In terms of tissue distribution, detected in photoreceptor outer segments in the retina (at protein level).

It localises to the membrane. The enzyme catalyses all-trans-retinol + NADP(+) = all-trans-retinal + NADPH + H(+). In terms of biological role, retinol dehydrogenase with a clear preference for NADP. Converts all-trans-retinal to all-trans-retinol. May play a role in the regeneration of visual pigment at high light intensity. The polypeptide is Retinol dehydrogenase 8 (RDH8) (Homo sapiens (Human)).